The sequence spans 122 residues: Large ribosomal subunit protein uL14 (122 aa).

This sequence belongs to the universal ribosomal protein uL14 family. Part of the 50S ribosomal subunit. Forms a cluster with proteins L3 and L19. In the 70S ribosome, L14 and L19 interact and together make contacts with the 16S rRNA in bridges B5 and B8.

Its function is as follows. Binds to 23S rRNA. Forms part of two intersubunit bridges in the 70S ribosome. In Citrifermentans bemidjiense (strain ATCC BAA-1014 / DSM 16622 / JCM 12645 / Bem) (Geobacter bemidjiensis), this protein is Large ribosomal subunit protein uL14.